A 127-amino-acid polypeptide reads, in one-letter code: Ribonuclease P protein component (127 aa).

The protein belongs to the RnpA family. Consists of a catalytic RNA component (M1 or rnpB) and a protein subunit.

The enzyme catalyses Endonucleolytic cleavage of RNA, removing 5'-extranucleotides from tRNA precursor.. In terms of biological role, RNaseP catalyzes the removal of the 5'-leader sequence from pre-tRNA to produce the mature 5'-terminus. It can also cleave other RNA substrates such as 4.5S RNA. The protein component plays an auxiliary but essential role in vivo by binding to the 5'-leader sequence and broadening the substrate specificity of the ribozyme. This is Ribonuclease P protein component from Synechococcus sp. (strain RCC307).